The primary structure comprises 356 residues: SERTA domain-containing protein 4 (356 aa).

A disordered region spans residues 33-53 (SYGGPSPPGPAQAPLQGDRGA). The 47-residue stretch at 101–147 (IFEERAHILYMSLEKLKFIDDPEVYLRRSVLINNLMKRIHGEIIMQN) folds into the SERTA domain. A compositionally biased stretch (low complexity) spans 215 to 232 (TAASSPSASSSSSSSSSS). Disordered stretches follow at residues 215-238 (TAAS…LPLP), 280-302 (KLND…HEPV), and 332-356 (WKKS…GSKI). Positions 280-292 (KLNDEKANDDTNR) are enriched in basic and acidic residues.

This is SERTA domain-containing protein 4 (SERTAD4) from Homo sapiens (Human).